Here is a 507-residue protein sequence, read N- to C-terminus: DNA replication licensing factor MCM6 (507 aa).

The 208-residue stretch at 32-239 folds into the MCM domain; the sequence is LYHNLCTSLF…TDYAIARRIV (208 aa). ATP is bound by residues histidine 45, serine 85, threonine 86, alanine 87, lysine 88, serine 89, and asparagine 190. An Arginine finger motif is present at residues 214-217; sequence SRFD. Positions 305 and 308 each coordinate ADP. Lysine 329 carries the N6-acetyllysine modification. Positions 365–392 are disordered; sequence GPGGINGHADSPAPVNGFNGSGEDASQE. Serine 375, serine 390, and serine 448 each carry phosphoserine. The residue at position 477 (threonine 477) is a Phosphothreonine.

It belongs to the MCM family. In terms of assembly, component of the MCM2-7 complex. The complex forms a toroidal hexameric ring with the proposed subunit order MCM2-MCM6-MCM4-MCM7-MCM3-MCM5. Component of the CMG helicase complex, a hexameric ring of related MCM2-7 subunits stabilized by CDC45 and the tetrameric GINS complex. May interact with MCM10. Interacts with TIPIN. Interacts with CDT1. Interacts with MCMBP. Interacts with DDI2. O-glycosylated (O-GlcNAcylated), in a cell cycle-dependent manner.

The protein resides in the nucleus. It localises to the chromosome. It catalyses the reaction ATP + H2O = ADP + phosphate + H(+). Acts as a component of the MCM2-7 complex (MCM complex) which is the replicative helicase essential for 'once per cell cycle' DNA replication initiation and elongation in eukaryotic cells. Core component of CDC45-MCM-GINS (CMG) helicase, the molecular machine that unwinds template DNA during replication, and around which the replisome is built. The active ATPase sites in the MCM2-7 ring are formed through the interaction surfaces of two neighboring subunits such that a critical structure of a conserved arginine finger motif is provided in trans relative to the ATP-binding site of the Walker A box of the adjacent subunit. The six ATPase active sites, however, are likely to contribute differentially to the complex helicase activity. This Rattus norvegicus (Rat) protein is DNA replication licensing factor MCM6 (Mcm6).